The primary structure comprises 68 residues: Protein RH1 (68 aa).

This chain is Protein RH1, found in Pantherophis guttatus (Corn snake).